A 477-amino-acid chain; its full sequence is Aspartyl/glutamyl-tRNA(Asn/Gln) amidotransferase subunit B (477 aa).

Belongs to the GatB/GatE family. GatB subfamily. In terms of assembly, heterotrimer of A, B and C subunits.

It catalyses the reaction L-glutamyl-tRNA(Gln) + L-glutamine + ATP + H2O = L-glutaminyl-tRNA(Gln) + L-glutamate + ADP + phosphate + H(+). The catalysed reaction is L-aspartyl-tRNA(Asn) + L-glutamine + ATP + H2O = L-asparaginyl-tRNA(Asn) + L-glutamate + ADP + phosphate + 2 H(+). Allows the formation of correctly charged Asn-tRNA(Asn) or Gln-tRNA(Gln) through the transamidation of misacylated Asp-tRNA(Asn) or Glu-tRNA(Gln) in organisms which lack either or both of asparaginyl-tRNA or glutaminyl-tRNA synthetases. The reaction takes place in the presence of glutamine and ATP through an activated phospho-Asp-tRNA(Asn) or phospho-Glu-tRNA(Gln). The polypeptide is Aspartyl/glutamyl-tRNA(Asn/Gln) amidotransferase subunit B (Legionella pneumophila (strain Corby)).